The sequence spans 732 residues: MKKTIFQQLFLSVCALTVALPCSAQSPETSGKEFTLEQLMPGGKEFYNFYPEYVVGLQWMGDNYVFIEGDDLVFNKANGKSAQTTRFSAADLNALMPEGCKFQTTDAFPSFRTLDAGRGQVVLFTQRGLVGFDMLARKVTYLFDTNEETASLDFSPVGDRVAYVRNHNLYIARGGKLGEGMSRAIAVTIDGAETLVYGQAVHQREFGIEKGTFWSPKGSCLAFYRMDQSMVKPTPIVDYHPLEAESKPLYYPMAGTPSHHVTVGIYHLATGKTVYLQTGEPKEKFLTNLSWSPDENILYVAEVNRAQNECKVNAYDAETGRFVRTLFVETDKHYVEPLHPLTFLPGSNNQFIWQSRRDGWNHLYLYDTTGRLIRQVTKGEWEVTNFAGFDPKGTRLYFESTEASPLERHFYCIDIKGGKTKDLTPESGMHRTQLSPDGSAIIDIFQSPTVPRKVTVTNIGKGSYTLLEAKNPDTGYAMPEIRTGTIMAADGQTPLYYKLTMPLHFDPAKKYPVIVYVYGGPHAQLVTKTWRSSVGGWDIYMAQKGYAVFTVDSRGSANRGAAFEQVIHRRLGQTEMADQMCGVDFLKSQSWVDADRIGVHGWSYGGFMTTNLMLTHGDVFKVGVAGGPVIDWNRYEIMYGERYFDAPQENPEGYDAANLLKRAGDLKGRLMLIHGAIDPVVVWQHSLLFLDACVKARTYPDYYVYPSHEHNVMGPDRVHLYETITRYFTDHL.

A signal peptide spans 1–24 (MKKTIFQQLFLSVCALTVALPCSA). Catalysis depends on charge relay system residues S603, D678, and H710.

This sequence belongs to the peptidase S9B family.

It catalyses the reaction Hydrolysis of Xaa-Xaa-Pro-|-Yaa- releasing the N-terminal tripeptide of a peptide with Pro as the third residue (position P1) and where Yaa is not proline.. Serine proteinase. Releases tripeptides from the free amino terminus of proteins. Has a requirement for Pro in the P1 position, but is inactivated by Pro in the P1' position. In Porphyromonas gingivalis (strain ATCC 33277 / DSM 20709 / CIP 103683 / JCM 12257 / NCTC 11834 / 2561), this protein is Prolyl tripeptidyl peptidase.